A 318-amino-acid chain; its full sequence is MDCKSEESAQRTDSQAFQEPDGLPEAGGEDGLSESFQLLQVDVEYERPEETSPANSAVWSSKNMQRKQRHWERIVSSKKSKRKQERERRKAKRAEDPGNGTCPQHSKRFLKALTKEKLLEAKHSGPRLCVDLSMTQHMSKKELSRLAGQIRRLYGSNKKASRPFWICLTGFSTASPLYEECLRMNDGFSAYLLDVTEEDCFSLFPLETLVYLTPDSEHSLEDIDQSTVYVIGGLVDESIQKKVTFQKAREYSVKTARLPIQEYMIKRQNEKNYHSEILAINQVFDILSTYFETRNWPEALKKGVSPGKGYVLQNSAEG.

Residues 1-10 (MDCKSEESAQ) show a composition bias toward basic and acidic residues. Positions 1-105 (MDCKSEESAQ…DPGNGTCPQH (105 aa)) are disordered. Residues 52 to 63 (SPANSAVWSSKN) are compositionally biased toward polar residues. The span at 64–83 (MQRKQRHWERIVSSKKSKRK) shows a compositional bias: basic residues. Residues 72-93 (ERIVSSKKSKRKQERERRKAKR) are a coiled coil. Positions 84 to 96 (QERERRKAKRAED) are enriched in basic and acidic residues. Residues 114–311 (TKEKLLEAKH…KGVSPGKGYV (198 aa)) form the SAM-dependent MTase TRM10-type domain.

The protein belongs to the class IV-like SAM-binding methyltransferase superfamily. TRM10 family.

The catalysed reaction is guanosine(9) in tRNA + S-adenosyl-L-methionine = N(1)-methylguanosine(9) in tRNA + S-adenosyl-L-homocysteine + H(+). In terms of biological role, S-adenosyl-L-methionine-dependent guanine N(1)-methyltransferase that catalyzes the formation of N(1)-methylguanine at position 9 (m1G9) in tRNAs. Probably not able to catalyze formation of N(1)-methyladenine at position 9 (m1A9) in tRNAs. This chain is tRNA methyltransferase 10 homolog B (Trmt10b), found in Mus musculus (Mouse).